Consider the following 688-residue polypeptide: Glycine--tRNA ligase beta subunit (688 aa).

The protein belongs to the class-II aminoacyl-tRNA synthetase family. In terms of assembly, tetramer of two alpha and two beta subunits.

The protein localises to the cytoplasm. It catalyses the reaction tRNA(Gly) + glycine + ATP = glycyl-tRNA(Gly) + AMP + diphosphate. The polypeptide is Glycine--tRNA ligase beta subunit (Shewanella sp. (strain MR-7)).